We begin with the raw amino-acid sequence, 613 residues long: Putative adenosylhomocysteinase 3 (613 aa).

2 stretches are compositionally biased toward low complexity: residues 1–14 (MSVQ…AAKV) and 35–44 (AAAVGAMVPP). The interval 1–186 (MSVQVVSAAA…KQQKNSKGSS (186 aa)) is disordered. Position 2 is an N-acetylserine (serine 2). The interval 2–111 (SVQVVSAAAA…DGGEALVSPD (110 aa)) is LISN domain, inhibits interaction with ITPR1. A compositionally biased stretch (pro residues) spans 52–68 (APAPAPAAERPPAPGPG). A compositionally biased stretch (low complexity) spans 70 to 80 (GPTAALSPAAG). A Phosphoserine modification is found at serine 109. Over residues 137–146 (RPTKIGRRSL) the composition is skewed to basic residues. Positions 147-166 (SRSISQSSTDSYSSAASYTD) are enriched in low complexity. Phosphoserine occurs at positions 151, 154, 157, and 160. Residues threonine 238, aspartate 312, and glutamate 337 each contribute to the substrate site. 338–340 (SVT) lines the NAD(+) pocket. The substrate site is built by lysine 367 and aspartate 371. Residues asparagine 372, 403–408 (GEVGKG), glutamate 424, asparagine 459, 480–482 (MGH), and asparagine 527 contribute to the NAD(+) site.

This sequence belongs to the adenosylhomocysteinase family. In terms of assembly, homotetramer. Forms heteromultimers with AHCYL1 (via the C-terminal region). Interacts with ITPR1; with lower affinity than AHCYL1 and maybe via ITPR1. Interacts with SLC4A4. Interacts with ZCCHC4. The cofactor is NAD(+). Post-translationally, phosphorylated during neuronal differentiation at the LISN domain. Highly expressed in cerebrum, cerebellum and kidney. Also expressed in thymus, spleen, testis, ovary and, at lower, levels in lung and liver (at protein level). In cerebellum, expressed in interneurons.

The protein resides in the cytoplasm. The protein localises to the microsome. It carries out the reaction S-adenosyl-L-homocysteine + H2O = L-homocysteine + adenosine. Its pathway is amino-acid biosynthesis; L-homocysteine biosynthesis; L-homocysteine from S-adenosyl-L-homocysteine: step 1/1. Functionally, may regulate the electrogenic sodium/bicarbonate cotransporter SLC4A4 activity and Mg(2+)-sensitivity. On the contrary of its homolog AHCYL1, does not regulate ITPR1 sensitivity to inositol 1,4,5-trisphosphate. This chain is Putative adenosylhomocysteinase 3 (Ahcyl2), found in Mus musculus (Mouse).